Consider the following 483-residue polypeptide: Jacalin-related lectin 13 (483 aa).

A disordered region spans residues 1–20 (MTQKLESVGSERKSSEYMWD). 3 consecutive Jacalin-type lectin domains span residues 2-147 (TQKL…YVTW), 150-295 (PARM…YFTT), and 307-461 (FREK…YFFP).

It belongs to the jacalin lectin family.

The sequence is that of Jacalin-related lectin 13 (JAL13) from Arabidopsis thaliana (Mouse-ear cress).